A 25-amino-acid chain; its full sequence is Hypotensin-2 (25 aa).

The interval 1–25 is disordered; that stretch reads AEIDFSGIPEDIIKEIKETNAKPPA. Residue serine 6 is modified to Phosphoserine. Over residues 11–25 the composition is skewed to basic and acidic residues; the sequence is DIIKEIKETNAKPPA.

Belongs to the non-disulfide-bridged peptide (NDBP) superfamily. Expressed by the venom gland.

It localises to the secreted. Functionally, agonist of the B2 bradykinin receptor (BDKRB2). Potentiates the hypotensive effect of bradykinin (BK) and induces a direct vasorelaxing effect, independently of BK, by endothelium- and nitric oxide (NO)-dependent mechanisms in rat aortic ring preparations. Does not inhibit the angiotensin-converting enzyme (ACE). Also exerts proangiogenic, antiinflammatory, and antifibrogenic activities. Does not inhibit the angiotensin-converting enzyme (ACE) but weakly increases its activity, and weakly inhibits neprilysin (NEP) in a non-competitive manner. Exerts intermediate cytotoxicity and pro-inflammatory effects on mouse macrophages, and increases the phagocytic activity of these murine cells. Its function is as follows. Presents weak hemolytic activity at physiological concentrations (micromolar range), and weak lactate dehydrogenase (LDH) release from mast cells. Does not induce mast cell degranulation, and antimicrobial effects. In vivo, causes intense pain (but no edema formation), when injected in mice hind paws. Also induces discomfort and anxiety in mice, as it moderately diminishes locomotion and moderately increases rearing behavior. This is Hypotensin-2 from Tityus serrulatus (Brazilian scorpion).